Here is a 245-residue protein sequence, read N- to C-terminus: tRNA1(Val) (adenine(37)-N6)-methyltransferase (245 aa).

The protein belongs to the methyltransferase superfamily. tRNA (adenine-N(6)-)-methyltransferase family.

It localises to the cytoplasm. The enzyme catalyses adenosine(37) in tRNA1(Val) + S-adenosyl-L-methionine = N(6)-methyladenosine(37) in tRNA1(Val) + S-adenosyl-L-homocysteine + H(+). In terms of biological role, specifically methylates the adenine in position 37 of tRNA(1)(Val) (anticodon cmo5UAC). The chain is tRNA1(Val) (adenine(37)-N6)-methyltransferase from Cronobacter sakazakii (strain ATCC BAA-894) (Enterobacter sakazakii).